The primary structure comprises 338 residues: MVARAQPDRKQLPLVLLRLLCLLPTGLPVRSVDFTRGTDNITVRQGDTAILRCFVEDRSSKVAWLNRSGIIFAGEDKWSLDPRVELEKRSPLEYSLRIQKVDVYDEGSYTCSVQTQHHPKTSQVYLIVQVPPKISNISSDITVNEGSNVTLVCMANGRPEPVITWRHLTPTGKEFEGEEEYLEILGITREQSGKYECKAANEVASADVKQVRVTVNYPPTITESKSNEAATGRQALLRCEASAVPTPDFEWYRDDTRINSANGLEIKSTGSQSLLMVANVTEEHYGNYTCVAANKLGVTNASLYLYRPGTGRVDNGSVSLAVPLWLLAASLLCLLSKC.

The first 28 residues, 1 to 28 (MVARAQPDRKQLPLVLLRLLCLLPTGLP), serve as a signal peptide directing secretion. Ig-like C2-type domains follow at residues 29–122 (VRSV…PKTS), 132–214 (PKIS…VRVT), and 219–306 (PTIT…LYLY). Asparagine 40, asparagine 66, asparagine 136, and asparagine 148 each carry an N-linked (GlcNAc...) asparagine glycan. Cysteines 53 and 111 form a disulfide. 2 disulfide bridges follow: cysteine 153/cysteine 197 and cysteine 239/cysteine 290. N-linked (GlcNAc...) asparagine glycans are attached at residues asparagine 279, asparagine 287, asparagine 300, and asparagine 315. Asparagine 315 carries GPI-anchor amidated asparagine lipidation. Positions 316–338 (GSVSLAVPLWLLAASLLCLLSKC) are cleaved as a propeptide — removed in mature form.

The protein belongs to the immunoglobulin superfamily. IgLON family.

The protein localises to the cell membrane. Functionally, mediates selective neuronal growth and axon targeting. Probably serves as a recognition molecule for the formation of limbic connections. The sequence is that of Limbic system-associated membrane protein from Gallus gallus (Chicken).